The sequence spans 219 residues: Elongation factor Ts (219 aa).

The segment at 82 to 85 is involved in Mg(2+) ion dislocation from EF-Tu; that stretch reads TDFV.

Belongs to the EF-Ts family.

It is found in the cytoplasm. Functionally, associates with the EF-Tu.GDP complex and induces the exchange of GDP to GTP. It remains bound to the aminoacyl-tRNA.EF-Tu.GTP complex up to the GTP hydrolysis stage on the ribosome. The chain is Elongation factor Ts from Trichodesmium erythraeum (strain IMS101).